A 151-amino-acid polypeptide reads, in one-letter code: MKKIDVKILDRRICDRFPLPAYATTGSAGLDLRACIDEPMVLAPGETTLIPTGLAIHIADANLAAVILPRSGLGHKHGIVLGNLVGLIDSDYQGPLMVSVWNRGQDIFTIEPGERMAQMVFVPVVQAEFNLVESFDTSERGEGGFGHSGRQ.

Residues 70 to 72 (RSG), Asn83, 87 to 89 (LID), and Met97 each bind substrate.

This sequence belongs to the dUTPase family. It depends on Mg(2+) as a cofactor.

It carries out the reaction dUTP + H2O = dUMP + diphosphate + H(+). It functions in the pathway pyrimidine metabolism; dUMP biosynthesis; dUMP from dCTP (dUTP route): step 2/2. This enzyme is involved in nucleotide metabolism: it produces dUMP, the immediate precursor of thymidine nucleotides and it decreases the intracellular concentration of dUTP so that uracil cannot be incorporated into DNA. In Sodalis glossinidius (strain morsitans), this protein is Deoxyuridine 5'-triphosphate nucleotidohydrolase.